The sequence spans 1008 residues: Probable transport protein MmpL10 (1008 aa).

12 consecutive transmembrane segments (helical) span residues 23-43 (WPWV…MTVP), 202-222 (IELV…RNPI), 225-245 (LLPL…VSGV), 257-277 (MIVL…VFLI), 301-321 (ALIS…ITFL), 340-360 (IGIA…LVLA), 389-409 (VAYL…ASLV), 835-855 (DLQL…MALL), 862-882 (IYLV…CVLV), 895-915 (VPGL…MLLA), 940-960 (VITA…LSSI), and 961-981 (ATVV…TFIV).

The protein belongs to the resistance-nodulation-cell division (RND) (TC 2.A.6) family. MmpL subfamily.

Its subcellular location is the cell membrane. This chain is Probable transport protein MmpL10 (mmpL10), found in Mycobacterium leprae (strain TN).